We begin with the raw amino-acid sequence, 808 residues long: Ribosome biogenesis protein BOP1 homolog (808 aa).

The tract at residues 1–56 (MTSPKGKPSPKRSAPAPTTAALTPRTEERTEGATSSASASASSHISSSFDSPRDDT) is disordered. Composition is skewed to low complexity over residues 12–24 (RSAPAPTTAALTP) and 33–50 (ATSSASASASSHISSSFD). WD repeat units lie at residues 430–469 (GHTATVRSVSVSPNGQYLATGCDDHLVRVFEVQTGRLMKR), 640–680 (KFSE…RRFK), 682–720 (SGGVTTCLSIHPEGDNFLVGDTTSHTSWFDMDFSDKPYK), 724–766 (SHRG…DYNK), and 777–808 (KHQRPVYAVAWHPTLAWLFTSTEDGVVTAWTE).

The protein belongs to the WD repeat BOP1/ERB1 family.

It is found in the nucleus. The protein resides in the nucleolus. The protein localises to the nucleoplasm. Functionally, required for maturation of ribosomal RNAs and formation of the large ribosomal subunit. The sequence is that of Ribosome biogenesis protein BOP1 homolog from Leishmania infantum.